The following is a 42-amino-acid chain: Iota-conotoxin-like R11.15 (42 aa).

4 disulfides stabilise this stretch: C5-C19, C12-C22, C18-C27, and C21-C36.

This sequence belongs to the conotoxin I1 superfamily. As to expression, expressed by the venom duct.

Its subcellular location is the secreted. Its function is as follows. Iota-conotoxins bind to voltage-gated sodium channels (Nav) and act as agonists by shifting the voltage-dependence of activation to more hyperpolarized levels. Produces general excitatory symptoms. The polypeptide is Iota-conotoxin-like R11.15 (Conus radiatus (Rayed cone)).